Reading from the N-terminus, the 806-residue chain is Phenylalanine--tRNA ligase beta subunit (806 aa).

Positions 40–153 constitute a tRNA-binding domain; sequence FNSPDYLQLA…ADAIIIDHVS (114 aa). A B5 domain is found at 413–487; sequence PFSKKLTVNF…KLIDINKLKP (75 aa). Mg(2+) contacts are provided by aspartate 465, aspartate 471, glutamate 474, and glutamate 475.

It belongs to the phenylalanyl-tRNA synthetase beta subunit family. Type 1 subfamily. In terms of assembly, tetramer of two alpha and two beta subunits. Requires Mg(2+) as cofactor.

The protein localises to the cytoplasm. It catalyses the reaction tRNA(Phe) + L-phenylalanine + ATP = L-phenylalanyl-tRNA(Phe) + AMP + diphosphate + H(+). The protein is Phenylalanine--tRNA ligase beta subunit (pheT) of Mycoplasma genitalium (strain ATCC 33530 / DSM 19775 / NCTC 10195 / G37) (Mycoplasmoides genitalium).